We begin with the raw amino-acid sequence, 486 residues long: Phosphomethylpyrimidine synthase (486 aa).

Substrate contacts are provided by residues Asn-80, Met-109, Tyr-139, His-175, 195-197 (SRG), 236-239 (DSLR), and Glu-275. His-279 contacts Zn(2+). Tyr-329 serves as a coordination point for substrate. His-370 provides a ligand contact to Zn(2+). Positions 450, 453, and 458 each coordinate [4Fe-4S] cluster.

Belongs to the ThiC family. The cofactor is [4Fe-4S] cluster.

The enzyme catalyses 5-amino-1-(5-phospho-beta-D-ribosyl)imidazole + S-adenosyl-L-methionine = 4-amino-2-methyl-5-(phosphooxymethyl)pyrimidine + CO + 5'-deoxyadenosine + formate + L-methionine + 3 H(+). It participates in cofactor biosynthesis; thiamine diphosphate biosynthesis. Functionally, catalyzes the synthesis of the hydroxymethylpyrimidine phosphate (HMP-P) moiety of thiamine from aminoimidazole ribotide (AIR) in a radical S-adenosyl-L-methionine (SAM)-dependent reaction. This is Phosphomethylpyrimidine synthase from Trichodesmium erythraeum (strain IMS101).